An 884-amino-acid chain; its full sequence is Protein translocase subunit SecA (884 aa).

ATP contacts are provided by residues Gln-83, 101-105 (GEGKT), and Asp-491.

The protein belongs to the SecA family.

Its subcellular location is the plastid. The protein resides in the chloroplast stroma. It is found in the chloroplast thylakoid membrane. The catalysed reaction is ATP + H2O + cellular proteinSide 1 = ADP + phosphate + cellular proteinSide 2.. Has a central role in coupling the hydrolysis of ATP to the transfer of proteins across the thylakoid membrane. The chain is Protein translocase subunit SecA from Pyropia yezoensis (Susabi-nori).